Here is a 170-residue protein sequence, read N- to C-terminus: ATP synthase subunit b, chloroplastic (170 aa).

Residues 15-35 form a helical membrane-spanning segment; sequence ILETNVINLAVVVGVVVFFVG.

This sequence belongs to the ATPase B chain family. In terms of assembly, F-type ATPases have 2 components, F(1) - the catalytic core - and F(0) - the membrane proton channel. F(1) has five subunits: alpha(3), beta(3), gamma(1), delta(1), epsilon(1). F(0) has four main subunits: a(1), b(1), b'(1) and c(10-14). The alpha and beta chains form an alternating ring which encloses part of the gamma chain. F(1) is attached to F(0) by a central stalk formed by the gamma and epsilon chains, while a peripheral stalk is formed by the delta, b and b' chains.

It is found in the plastid. The protein resides in the chloroplast thylakoid membrane. Functionally, f(1)F(0) ATP synthase produces ATP from ADP in the presence of a proton or sodium gradient. F-type ATPases consist of two structural domains, F(1) containing the extramembraneous catalytic core and F(0) containing the membrane proton channel, linked together by a central stalk and a peripheral stalk. During catalysis, ATP synthesis in the catalytic domain of F(1) is coupled via a rotary mechanism of the central stalk subunits to proton translocation. Its function is as follows. Component of the F(0) channel, it forms part of the peripheral stalk, linking F(1) to F(0). The chain is ATP synthase subunit b, chloroplastic from Stigeoclonium helveticum (Green alga).